The following is a 432-amino-acid chain: Glutamate-1-semialdehyde 2,1-aminomutase (432 aa).

Residue Lys-265 is modified to N6-(pyridoxal phosphate)lysine.

Belongs to the class-III pyridoxal-phosphate-dependent aminotransferase family. HemL subfamily. In terms of assembly, homodimer. It depends on pyridoxal 5'-phosphate as a cofactor.

Its subcellular location is the cytoplasm. The catalysed reaction is (S)-4-amino-5-oxopentanoate = 5-aminolevulinate. It participates in porphyrin-containing compound metabolism; protoporphyrin-IX biosynthesis; 5-aminolevulinate from L-glutamyl-tRNA(Glu): step 2/2. The sequence is that of Glutamate-1-semialdehyde 2,1-aminomutase from Photobacterium profundum (strain SS9).